Here is a 775-residue protein sequence, read N- to C-terminus: MASLIYRQLLSNSYVTNISDEVNEIGTKKTTNVTVNPGPFAQTGYAPVDWGHGELPDSTLVQPTLDGPYQPTSLNLPVDYWMLIAPTREGRVAEGTNTTDRWFACVLVEPNVQNTQRQYVLDGQNVQLQVSNDSSTSWKFILFIKLTPDGTYTQYSTLSTPHKLCSWMKRDNRVYWYQGSSPNASESYYLTINNDNSNVSSDAEFYLIPQSQTAMCTQYINNGLPPIQNTRNIVPVNIASRQIKDIRAQMNEDIVISKTSLWKEMQYNRDIIIRFKFANSIIKSGGLGYKWSEISFKPMNYQYTYTRDGEEVTAHTTCSVNGVNDFNYNGGTLPTDFAISRFEVIKENSYVYVDYWDDSQAFRNMVYVRSLAANLNDVVCSGGSYSFALPVGNHPVMSGGAVTLTSAGVTLSTQYTDYVSLNSLRFRFRLAVSEPSFSISRTRMSGIYGLPAVNPNNNAEYYEIAGRFSLISLVPTNDDYQTPIANSVTVRQDLERQLGELREEFNSLSQEIAVSQLIDLATLPLDMFSMFSGIKSTVEAVKSMTTNVMKRFKTSSLANAISDLTSNMSEAASSVRLTSVRSIGTVTLPRARVSLQVSDDLRSMQDVSTQVSNVSRNLRLKEFTTQTDTLSFDDISAAVLKTKLDKSTQISQQTMPDIIAESSEKFIPKRSYRIVDEDTAFETGIDGTFYAYKVDTFNEIPFDMERFNKLITDSPVLSAIIDFKTLKNLNDNYGITKKQAMELLHSNPKTLKEFINNNNPIIRNRIENLISQCRL.

The segment at Leu-65–Leu-224 is spike head. The spike body and stalk (antigen domain) stretch occupies residues Ala-248–Asp-479. Residues Asp-308–Glu-310 carry the DGE motif; interaction with ITGA2/ITGB1 heterodimer motif. A disulfide bridge connects residues Cys-318 and Cys-380. The segment at Leu-389 to Val-409 is hydrophobic; possible role in virus entry into host cell. A YGL motif; interaction with ITGA4 motif is present at residues Tyr-448–Leu-450. Positions Ile-484–Glu-511 form a coiled coil. A spike foot region spans residues Gln-510–Leu-775.

It belongs to the rotavirus VP4 family. Homotrimer. VP4 adopts a dimeric appearance above the capsid surface, while forming a trimeric base anchored inside the capsid layer. Only hints of the third molecule are observed above the capsid surface. It probably performs a series of molecular rearrangements during viral entry. Prior to trypsin cleavage, it is flexible. The priming trypsin cleavage triggers its rearrangement into rigid spikes with approximate two-fold symmetry of their protruding parts. After an unknown second triggering event, cleaved VP4 may undergo another rearrangement, in which two VP5* subunits fold back on themselves and join a third subunit to form a tightly associated trimer, shaped like a folded umbrella. Interacts with VP6. Interacts with VP7. As to quaternary structure, homotrimer. The trimer is coiled-coil stabilized by its C-terminus, however, its N-terminus, known as antigen domain or 'body', seems to be flexible allowing it to self-associate either as a dimer or a trimer. Post-translationally, proteolytic cleavage by trypsin results in activation of VP4 functions and greatly increases infectivity. The penetration into the host cell is dependent on trypsin treatment of VP4. It produces two peptides, VP5* and VP8* that remain associated with the virion. Cleavage of VP4 by trypsin probably occurs in vivo in the lumen of the intestine prior to infection of enterocytes. Trypsin seems to be incorporated into the three-layered viral particles but remains inactive as long as the viral outer capsid is intact and would only be activated upon the solubilization of the latter.

Its subcellular location is the virion. It is found in the host rough endoplasmic reticulum. The protein localises to the host cell membrane. It localises to the host cytoplasm. The protein resides in the host cytoskeleton. Its subcellular location is the host endoplasmic reticulum-Golgi intermediate compartment. Functionally, spike-forming protein that mediates virion attachment to the host epithelial cell receptors and plays a major role in cell penetration, determination of host range restriction and virulence. Rotavirus attachment and entry into the host cell probably involves multiple sequential contacts between the outer capsid proteins VP4 and VP7, and the cell receptors. It is subsequently lost, together with VP7, following virus entry into the host cell. Following entry into the host cell, low intracellular or intravesicular Ca(2+) concentration probably causes the calcium-stabilized VP7 trimers to dissociate from the virion. This step is probably necessary for the membrane-disrupting entry step and the release of VP4, which is locked onto the virion by VP7. During the virus exit from the host cell, VP4 seems to be required to target the newly formed virions to the host cell lipid rafts. Forms the spike 'foot' and 'body' and acts as a membrane permeabilization protein that mediates release of viral particles from endosomal compartments into the cytoplasm. During entry, the part of VP5* that protrudes from the virus folds back on itself and reorganizes from a local dimer to a trimer. This reorganization may be linked to membrane penetration by exposing VP5* hydrophobic region. In integrin-dependent strains, VP5* targets the integrin heterodimer ITGA2/ITGB1 for cell attachment. Its function is as follows. Forms the head of the spikes and mediates the recognition of specific host cell surface glycans. It is the viral hemagglutinin and an important target of neutralizing antibodies. In sialic acid-dependent strains, VP8* binds to host cell sialic acid, most probably a ganglioside, providing the initial contact. In some other strains, VP8* mediates the attachment to histo-blood group antigens (HBGAs) for viral entry. In Rotavirus A (isolate RVA/Cat/Japan/FRV-1/1986/G3P3[9]) (RV-A), this protein is Outer capsid protein VP4.